Consider the following 152-residue polypeptide: Nucleoside diphosphate kinase (152 aa).

Residues Lys-11, Phe-59, Arg-87, Thr-93, Arg-104, and Asn-114 each contribute to the ATP site. The active-site Pros-phosphohistidine intermediate is the His-117.

This sequence belongs to the NDK family. In terms of assembly, homotetramer. Mg(2+) serves as cofactor.

The protein resides in the cytoplasm. It catalyses the reaction a 2'-deoxyribonucleoside 5'-diphosphate + ATP = a 2'-deoxyribonucleoside 5'-triphosphate + ADP. It carries out the reaction a ribonucleoside 5'-diphosphate + ATP = a ribonucleoside 5'-triphosphate + ADP. In terms of biological role, major role in the synthesis of nucleoside triphosphates other than ATP. The ATP gamma phosphate is transferred to the NDP beta phosphate via a ping-pong mechanism, using a phosphorylated active-site intermediate. The chain is Nucleoside diphosphate kinase from Prochlorococcus marinus subsp. pastoris (strain CCMP1986 / NIES-2087 / MED4).